We begin with the raw amino-acid sequence, 585 residues long: Glutamate decarboxylase 2 (585 aa).

The tract at residues 1-25 is disordered; it reads MASPGSGFWSFGSEDGSGDPENPST. A phosphoserine mark is found at S3, S6, S10, and S13. Residues C30 and C45 are each lipidated (S-palmitoyl cysteine). 181–183 is a binding site for substrate; the sequence is QLS. N6-(pyridoxal phosphate)lysine is present on K396. R558 serves as a coordination point for substrate.

This sequence belongs to the group II decarboxylase family. In terms of assembly, homodimer. Pyridoxal 5'-phosphate is required as a cofactor. In terms of processing, phosphorylated; which does not affect kinetic parameters or subcellular location. Post-translationally, palmitoylated; which is required for presynaptic clustering.

The protein localises to the cytoplasm. It is found in the cytosol. Its subcellular location is the cytoplasmic vesicle. The protein resides in the presynaptic cell membrane. It localises to the golgi apparatus membrane. It catalyses the reaction L-glutamate + H(+) = 4-aminobutanoate + CO2. Functionally, catalyzes the production of GABA. The polypeptide is Glutamate decarboxylase 2 (GAD2) (Canis lupus familiaris (Dog)).